Consider the following 594-residue polypeptide: Tripeptidyl-peptidase sed4 (594 aa).

The first 20 residues, 1 to 20, serve as a signal peptide directing secretion; that stretch reads MLSSTLYAGWLLSLAAPALC. Positions 21-187 are cleaved as a propeptide — removed in mature form; the sequence is VVQEKLSAVP…AVKLPALPRR (167 aa). N-linked (GlcNAc...) asparagine glycosylation is found at Asn-191, Asn-229, and Asn-250. The Peptidase S53 domain maps to 197 to 594; the sequence is LITPDCLVEM…MKLKELVLSL (398 aa). Residues Glu-272, Asp-276, and Ser-494 each act as charge relay system in the active site. 2 residues coordinate Ca(2+): Asp-536 and Ile-537. Asn-568 is a glycosylation site (N-linked (GlcNAc...) asparagine). Residues Gly-572 and Asp-574 each coordinate Ca(2+).

The cofactor is Ca(2+). Post-translationally, N-glycosylated.

Its subcellular location is the secreted. It is found in the extracellular space. The enzyme catalyses Release of an N-terminal tripeptide from a polypeptide.. In terms of biological role, secreted tripeptidyl-peptidase which degrades proteins at acidic pHs and is involved in virulence. In Aspergillus fumigatus (strain ATCC MYA-4609 / CBS 101355 / FGSC A1100 / Af293) (Neosartorya fumigata), this protein is Tripeptidyl-peptidase sed4 (sed4).